The chain runs to 148 residues: Small ribosomal subunit protein uS7m (148 aa).

This sequence belongs to the universal ribosomal protein uS7 family. In terms of assembly, part of the small ribosomal subunit.

The protein resides in the mitochondrion. Its function is as follows. One of the primary rRNA binding proteins, it binds directly to 18S rRNA where it nucleates assembly of the head domain of the small subunit. This is Small ribosomal subunit protein uS7m (RPS7) from Arabidopsis thaliana (Mouse-ear cress).